We begin with the raw amino-acid sequence, 365 residues long: Peptide chain release factor 2 (365 aa).

Residue Q252 is modified to N5-methylglutamine.

This sequence belongs to the prokaryotic/mitochondrial release factor family. In terms of processing, methylated by PrmC. Methylation increases the termination efficiency of RF2.

The protein localises to the cytoplasm. Functionally, peptide chain release factor 2 directs the termination of translation in response to the peptide chain termination codons UGA and UAA. This Escherichia coli (strain K12 / MC4100 / BW2952) protein is Peptide chain release factor 2.